The chain runs to 370 residues: MHRLIFVYTLICANFCSCRDTSATPQSASIKALRNANLRRDESNHLTDLYRRDETIQVKGNGYVQSPRFPNSYPRNLLLTWRLHSQENTRIQLVFDNQFGLEEAENDICRYDFVEVEDISETSTIIRGRWCGHKEVPPRIKSRTNQIKITFKSDDYFVAKPGFKIYYSLLEDFQPAAASETNWESVTSSISGVSYNSPSVTDPTLIADALDKKIAEFDTVEDLLKYFNPESWQEDLENMYLDTPRYRGRSYHDRKSKVDLDRLNDDAKRYSCTPRNYSVNIREELKLANVVFFPRCLLVQRCGGNCGCGTVNWRSCTCNSGKTVKKYHEVLQFEPGHIKRRGRAKTMALVDIQLDHHERCDCICSSRPPR.

The first 18 residues, 1–18 (MHRLIFVYTLICANFCSC), serve as a signal peptide directing secretion. One can recognise a CUB domain in the interval 52–170 (RDETIQVKGN…PGFKIYYSLL (119 aa)). Cysteines 109 and 131 form a disulfide. Asn276 is a glycosylation site (N-linked (GlcNAc...) asparagine). Intrachain disulfides connect Cys302–Cys360 and Cys306–Cys362.

It belongs to the PDGF/VEGF growth factor family. Homodimer; disulfide-linked. Interacts with PDGFRB homodimers, and with heterodimers formed by PDGFRA and PDGFRB. Activated by proteolytic cleavage. Proteolytic removal of the N-terminal CUB domain releasing the core domain is necessary for unmasking the receptor-binding epitopes of the core domain. Cleavage after Arg-247 or Arg-249 by urokinase plasminogen activator gives rise to the active form. In terms of tissue distribution, expressed at high levels in the heart, pancreas, adrenal gland and ovary and at low levels in placenta, liver, kidney, prostate, testis, small intestine, spleen and colon. In the kidney, expressed by the visceral epithelial cells of the glomeruli. A widespread expression is also seen in the medial smooth muscle cells of arteries and arterioles, as well as in smooth muscle cells of vasa rectae in the medullary area. Expressed in the adventitial connective tissue surrounding the suprarenal artery. In chronic obstructive nephropathy, a persistent expression is seen in glomerular visceral epithelial cells and vascular smooth muscle cells, as well as de novo expression by periglomerular interstitial cells and by some neointimal cells of atherosclerotic vessels. Expression in normal prostate is seen preferentially in the mesenchyme of the gland while expression is increased and more profuse in prostate carcinoma. Expressed in many ovarian, lung, renal and brain cancer-derived cell lines.

It localises to the secreted. Its function is as follows. Growth factor that plays an essential role in the regulation of embryonic development, cell proliferation, cell migration, survival and chemotaxis. Potent mitogen for cells of mesenchymal origin. Plays an important role in wound healing. Induces macrophage recruitment, increased interstitial pressure, and blood vessel maturation during angiogenesis. Can initiate events that lead to a mesangial proliferative glomerulonephritis, including influx of monocytes and macrophages and production of extracellular matrix. In Homo sapiens (Human), this protein is Platelet-derived growth factor D (PDGFD).